Here is a 241-residue protein sequence, read N- to C-terminus: Demethylmenaquinone methyltransferase (241 aa).

Residues threonine 60, aspartate 81, and 106–107 (DA) contribute to the S-adenosyl-L-methionine site.

This sequence belongs to the class I-like SAM-binding methyltransferase superfamily. MenG/UbiE family.

The catalysed reaction is a 2-demethylmenaquinol + S-adenosyl-L-methionine = a menaquinol + S-adenosyl-L-homocysteine + H(+). It functions in the pathway quinol/quinone metabolism; menaquinone biosynthesis; menaquinol from 1,4-dihydroxy-2-naphthoate: step 2/2. Its function is as follows. Methyltransferase required for the conversion of demethylmenaquinol (DMKH2) to menaquinol (MKH2). In Staphylococcus carnosus (strain TM300), this protein is Demethylmenaquinone methyltransferase.